A 270-amino-acid chain; its full sequence is Regulatory protein RecX (270 aa).

It belongs to the RecX family.

It localises to the cytoplasm. Functionally, modulates RecA activity. The sequence is that of Regulatory protein RecX from Bacillus cereus (strain ZK / E33L).